The sequence spans 330 residues: Short chain dehydrogenase yanD (330 aa).

Positions 57, 86, 113, 204, and 208 each coordinate NADP(+). Tyr204 acts as the Proton donor in catalysis. Residue Lys208 is the Lowers pKa of active site Tyr of the active site.

This sequence belongs to the short-chain dehydrogenases/reductases (SDR) family.

It functions in the pathway secondary metabolite biosynthesis; terpenoid biosynthesis. Functionally, short chain dehydrogenase; part of the gene cluster that mediates the biosynthesis of yanuthone D, a fungal isoprenoid epoxycyclohexenone that acts as an antibiotic against fungi and bacteria. The first step of the pathway is the synthesis of 6-methylsalicylic acid (6-MSA) by the polyketide synthase yanA. 6-MSA is then converted to m-cresol by the decarboxylase yanB. The cytochrome P450 monooxygenase yanC then catalyzes the oxidation of m-cresol to toluquinol. Epoxidation of toluquinol is then performed by the short chain dehydrogenase yanD, with the help of yanE, and a further prenylation by yanG leads to 7-deacetoxyyanuthone A. The next step is the hydroxylation of C-22 of 7-deacetoxyyanuthone A by the cytochrome P450 monooxygenase yanH to yield 22-deacetylyanuthone A. O-Mevalon transferase yanI then attaches mevalon to the hydroxyl group of 22-deacetylyanuthone A to produce yanuthone E. Finally, the FAD-dependent monooxygenase yanF oxidizes the hydroxyl group at C15 of yanuthone E to form yanuthone D. Furthermore, several branching points in the pathway lead to the production of yanuthones F and G from 7-deacetoxyyanuthone A; yanuthones H and I from 22-deacetylyanuthone A; and yanuthone J from yanuthone E. YanD is also involved in the synthesis of yanuthone X1 which does not have 6-methylsalicylic acid (6-MSA) as precursor. The polypeptide is Short chain dehydrogenase yanD (Aspergillus niger (strain ATCC 1015 / CBS 113.46 / FGSC A1144 / LSHB Ac4 / NCTC 3858a / NRRL 328 / USDA 3528.7)).